A 348-amino-acid chain; its full sequence is Phosphoribosylformylglycinamidine cyclo-ligase (348 aa).

Belongs to the AIR synthase family.

It localises to the cytoplasm. It carries out the reaction 2-formamido-N(1)-(5-O-phospho-beta-D-ribosyl)acetamidine + ATP = 5-amino-1-(5-phospho-beta-D-ribosyl)imidazole + ADP + phosphate + H(+). Its pathway is purine metabolism; IMP biosynthesis via de novo pathway; 5-amino-1-(5-phospho-D-ribosyl)imidazole from N(2)-formyl-N(1)-(5-phospho-D-ribosyl)glycinamide: step 2/2. The polypeptide is Phosphoribosylformylglycinamidine cyclo-ligase (Aromatoleum aromaticum (strain DSM 19018 / LMG 30748 / EbN1) (Azoarcus sp. (strain EbN1))).